The sequence spans 305 residues: Putative S-adenosyl-L-methionine-dependent methyltransferase Mvan_1344 (305 aa).

S-adenosyl-L-methionine is bound by residues aspartate 130 and 159 to 160; that span reads DL.

It belongs to the UPF0677 family.

Functionally, exhibits S-adenosyl-L-methionine-dependent methyltransferase activity. In Mycolicibacterium vanbaalenii (strain DSM 7251 / JCM 13017 / BCRC 16820 / KCTC 9966 / NRRL B-24157 / PYR-1) (Mycobacterium vanbaalenii), this protein is Putative S-adenosyl-L-methionine-dependent methyltransferase Mvan_1344.